We begin with the raw amino-acid sequence, 859 residues long: Villin-like protein (859 aa).

Gelsolin-like repeat units follow at residues 24 to 76 (LKML…EARE), 148 to 188 (VSAT…SEKA), 264 to 308 (LVVQ…QEKK), 401 to 450 (LQRQ…EDTK), 521 to 561 (TRTM…DQRE), and 624 to 665 (LVLT…WKKE). The HP domain maps to 793-859 (SMVNGSLPRE…QQAKKKLGFF (67 aa)).

Belongs to the villin/gelsolin family.

Functionally, possible tumor suppressor. The polypeptide is Villin-like protein (Mus musculus (Mouse)).